The chain runs to 421 residues: Trimethyllysine dioxygenase, mitochondrial (421 aa).

The transit peptide at 1–15 (MWYHKLLHQQSRLRN) directs the protein to the mitochondrion. Lysine 179 and lysine 236 each carry N6-acetyllysine. Residues histidine 242, aspartate 244, and histidine 389 each coordinate Fe cation.

It belongs to the gamma-BBH/TMLD family. Homodimer. Fe(2+) serves as cofactor. It depends on L-ascorbate as a cofactor.

It localises to the mitochondrion matrix. It catalyses the reaction N(6),N(6),N(6)-trimethyl-L-lysine + 2-oxoglutarate + O2 = (3S)-3-hydroxy-N(6),N(6),N(6)-trimethyl-L-lysine + succinate + CO2. Its pathway is amine and polyamine biosynthesis; carnitine biosynthesis. Converts trimethyllysine (TML) into hydroxytrimethyllysine (HTML). The sequence is that of Trimethyllysine dioxygenase, mitochondrial (Tmlhe) from Mus musculus (Mouse).